Consider the following 353-residue polypeptide: S-adenosylmethionine:tRNA ribosyltransferase-isomerase (353 aa).

This sequence belongs to the QueA family. In terms of assembly, monomer.

It localises to the cytoplasm. The catalysed reaction is 7-aminomethyl-7-carbaguanosine(34) in tRNA + S-adenosyl-L-methionine = epoxyqueuosine(34) in tRNA + adenine + L-methionine + 2 H(+). The protein operates within tRNA modification; tRNA-queuosine biosynthesis. Functionally, transfers and isomerizes the ribose moiety from AdoMet to the 7-aminomethyl group of 7-deazaguanine (preQ1-tRNA) to give epoxyqueuosine (oQ-tRNA). This is S-adenosylmethionine:tRNA ribosyltransferase-isomerase from Burkholderia vietnamiensis (strain G4 / LMG 22486) (Burkholderia cepacia (strain R1808)).